Reading from the N-terminus, the 434-residue chain is 4-hydroxy-3-methylbut-2-en-1-yl diphosphate synthase (flavodoxin) (434 aa).

Residues 1–15 (MQSEAQSPRSSQICS) are compositionally biased toward polar residues. The disordered stretch occupies residues 1-24 (MQSEAQSPRSSQICSTEPVFGGHQ). Positions 322, 325, 368, and 375 each coordinate [4Fe-4S] cluster.

The protein belongs to the IspG family. [4Fe-4S] cluster serves as cofactor.

It catalyses the reaction (2E)-4-hydroxy-3-methylbut-2-enyl diphosphate + oxidized [flavodoxin] + H2O + 2 H(+) = 2-C-methyl-D-erythritol 2,4-cyclic diphosphate + reduced [flavodoxin]. The protein operates within isoprenoid biosynthesis; isopentenyl diphosphate biosynthesis via DXP pathway; isopentenyl diphosphate from 1-deoxy-D-xylulose 5-phosphate: step 5/6. Functionally, converts 2C-methyl-D-erythritol 2,4-cyclodiphosphate (ME-2,4cPP) into 1-hydroxy-2-methyl-2-(E)-butenyl 4-diphosphate. This is 4-hydroxy-3-methylbut-2-en-1-yl diphosphate synthase (flavodoxin) from Burkholderia cenocepacia (strain ATCC BAA-245 / DSM 16553 / LMG 16656 / NCTC 13227 / J2315 / CF5610) (Burkholderia cepacia (strain J2315)).